Reading from the N-terminus, the 182-residue chain is Cbp/p300-interacting transactivator 4 (182 aa).

A disordered region spans residues 22-129; it reads GPHAPRTLQP…PPPPPPALGC (108 aa). Polar residues predominate over residues 64-89; the sequence is SPVSFQPFPVSQSPGAGSTHLQSAAT. The span at 100-117 shows a compositional bias: low complexity; that stretch reads AAAGGPSPLQPAPGAAAS.

It belongs to the CITED family. Interacts via its C-terminal region with the CH1 domain of CREBBP and EP300. Interacts with all TFAP2/AP-2 isoforms. Strongly expressed in heart, spleen and testis, and weakly in liver and kidney.

The protein localises to the nucleus. It localises to the cytoplasm. Acts as a transcriptional coactivator for TFAP2/AP-2. Enhances estrogen-dependent transactivation mediated by estrogen receptors. May function as an inhibitor of transactivation by HIF1A by disrupting HIF1A interaction with CREBBP. May be involved in regulation of gene expression during development and differentiation of blood cells, endothelial cells and mammary epithelial cells. The chain is Cbp/p300-interacting transactivator 4 from Mus musculus (Mouse).